Reading from the N-terminus, the 364-residue chain is UDP-N-acetylglucosamine--N-acetylmuramyl-(pentapeptide) pyrophosphoryl-undecaprenol N-acetylglucosamine transferase (364 aa).

UDP-N-acetyl-alpha-D-glucosamine contacts are provided by residues 10-12, asparagine 124, serine 195, isoleucine 250, and glutamine 295; that span reads TGG.

The protein belongs to the glycosyltransferase 28 family. MurG subfamily.

The protein resides in the cell membrane. It catalyses the reaction di-trans,octa-cis-undecaprenyl diphospho-N-acetyl-alpha-D-muramoyl-L-alanyl-D-glutamyl-meso-2,6-diaminopimeloyl-D-alanyl-D-alanine + UDP-N-acetyl-alpha-D-glucosamine = di-trans,octa-cis-undecaprenyl diphospho-[N-acetyl-alpha-D-glucosaminyl-(1-&gt;4)]-N-acetyl-alpha-D-muramoyl-L-alanyl-D-glutamyl-meso-2,6-diaminopimeloyl-D-alanyl-D-alanine + UDP + H(+). Its pathway is cell wall biogenesis; peptidoglycan biosynthesis. In terms of biological role, cell wall formation. Catalyzes the transfer of a GlcNAc subunit on undecaprenyl-pyrophosphoryl-MurNAc-pentapeptide (lipid intermediate I) to form undecaprenyl-pyrophosphoryl-MurNAc-(pentapeptide)GlcNAc (lipid intermediate II). The protein is UDP-N-acetylglucosamine--N-acetylmuramyl-(pentapeptide) pyrophosphoryl-undecaprenol N-acetylglucosamine transferase of Bacillus cytotoxicus (strain DSM 22905 / CIP 110041 / 391-98 / NVH 391-98).